The sequence spans 152 residues: NADH-quinone oxidoreductase subunit I 1 (152 aa).

2 consecutive 4Fe-4S ferredoxin-type domains span residues 53–83 (MKLGENGETLCIGCNLCALACPENLIAMKSD) and 94–123 (VTYVYDVSRCMFCGLCEEACPTQSLKLGTG). [4Fe-4S] cluster contacts are provided by C63, C66, C69, C73, C103, C106, C109, and C113.

It belongs to the complex I 23 kDa subunit family. NDH-1 is composed of 14 different subunits. Subunits NuoA, H, J, K, L, M, N constitute the membrane sector of the complex. It depends on [4Fe-4S] cluster as a cofactor.

It localises to the cell inner membrane. It catalyses the reaction a quinone + NADH + 5 H(+)(in) = a quinol + NAD(+) + 4 H(+)(out). Its function is as follows. NDH-1 shuttles electrons from NADH, via FMN and iron-sulfur (Fe-S) centers, to quinones in the respiratory chain. The immediate electron acceptor for the enzyme in this species is believed to be ubiquinone. Couples the redox reaction to proton translocation (for every two electrons transferred, four hydrogen ions are translocated across the cytoplasmic membrane), and thus conserves the redox energy in a proton gradient. The protein is NADH-quinone oxidoreductase subunit I 1 of Koribacter versatilis (strain Ellin345).